The sequence spans 427 residues: Proteinase-activated receptor 1 (427 aa).

Positions 1–21 (MGPRWLLLWAAGLGLCSPLVS) are cleaved as a signal peptide. Positions 22–41 (ARTRGPRPGTDPTNGTLGPR) are cleaved as a propeptide — removed for receptor activation. The tract at residues 23 to 87 (RTRGPRPGTD…RSSPPQKSPP (65 aa)) is disordered. Asparagine 35 carries N-linked (GlcNAc...) asparagine glycosylation. The Extracellular segment spans residues 42-104 (SFFLRNSNDG…SGYLTSAWLT (63 aa)). Positions 58 to 68 (PEDEDSSEGEF) are enriched in acidic residues. Residue asparagine 77 is glycosylated (N-linked (GlcNAc...) asparagine). The helical transmembrane segment at 105 to 130 (VFIPSVYTGVFLVSLPLNIMAVVVFV) threads the bilayer. At 131 to 139 (LKMKVKKPA) the chain is on the cytoplasmic side. A helical membrane pass occupies residues 140–159 (VVYMLHLAAADVLFVCVLPF). Residues 160–178 (KISYYFSGSDWRFGSAMCR) lie on the Extracellular side of the membrane. A disulfide bridge connects residues cysteine 177 and cysteine 256. A helical transmembrane segment spans residues 179-200 (FVTAAFYGNMYASIMLMTAISV). The Cytoplasmic segment spans residues 201 to 220 (DRFLAVVYPIQSLSWRTLGR). Residues 221–241 (ASFICLAIWAMAIAGVAPLLL) form a helical membrane-spanning segment. Topologically, residues 242–270 (QEQATQVPGLNITACHDVLNQTLLEGYYS) are extracellular. Asparagine 252 and asparagine 261 each carry an N-linked (GlcNAc...) asparagine glycan. Residues 271 to 290 (YYFSAFSAVFFFVPLTLSTV) form a helical membrane-spanning segment. The Cytoplasmic segment spans residues 291–313 (SYVSIIRCLSSSTVANQNKKSRA). A helical transmembrane segment spans residues 314-336 (LLLSAAVFCIFILCFGPTNILLL). At 337 to 351 (LHYAFLSSDPMTEAA) the chain is on the extracellular side. A helical transmembrane segment spans residues 352–376 (YFAYLLCVCVSSISCCIDPLIYYYA). At 377–427 (SSECQRHLFAILHCKESSDPGSCNSSGQLMPSKMDTCSSNLSSSLYKKLLT) the chain is on the cytoplasmic side. Serine 420 carries the phosphoserine modification.

This sequence belongs to the G-protein coupled receptor 1 family. Proteolytic cleavage by thrombin generates a new N-terminus that functions as a tethered ligand. Also proteolytically cleaved by cathepsin CTSG. Post-translationally, phosphorylated in the C-terminal tail; probably mediating desensitization prior to the uncoupling and internalization of the receptor.

It is found in the cell membrane. High affinity receptor that binds the activated thrombin, leading to calcium release from intracellular stores. The thrombin-activated receptor signaling pathway is mediated through PTX-insensitive G proteins, activation of phospholipase C resulting in the production of 1D-myo-inositol 1,4,5-trisphosphate (InsP3) which binds to InsP3 receptors causing calcium release from the stores. In astrocytes, the calcium released into the cytosol allows the Ca(2+)-dependent release of L-glutamate into the synaptic cleft through BEST1, that targets the neuronal postsynaptic GRIN2A/NMDAR receptor resulting in the synaptic plasticity regulation. May play a role in platelets activation and in vascular development. Mediates up-regulation of pro-inflammatory cytokines, such as MCP-1/CCL2 and IL6, triggered by coagulation factor Xa (F10) in cardiac fibroblasts and umbilical vein endothelial cells. The sequence is that of Proteinase-activated receptor 1 from Bos taurus (Bovine).